We begin with the raw amino-acid sequence, 84 residues long: Exodeoxyribonuclease 7 small subunit (84 aa).

The protein belongs to the XseB family. In terms of assembly, heterooligomer composed of large and small subunits.

It is found in the cytoplasm. It carries out the reaction Exonucleolytic cleavage in either 5'- to 3'- or 3'- to 5'-direction to yield nucleoside 5'-phosphates.. Functionally, bidirectionally degrades single-stranded DNA into large acid-insoluble oligonucleotides, which are then degraded further into small acid-soluble oligonucleotides. This is Exodeoxyribonuclease 7 small subunit from Yersinia pseudotuberculosis serotype O:1b (strain IP 31758).